Consider the following 267-residue polypeptide: Ras-related protein Rab-36 (267 aa).

The GTP site is built by Val68, Gly69, Lys70, Thr71, Ser72, Asp83, Tyr86, and Thr89. Residue Thr71 participates in Mg(2+) binding. Positions 76–94 (RFCKNVFDRDYKATIGVDF) match the Switch 1 motif. Residues Thr89 and Asp112 each contribute to the Mg(2+) site. A Switch 2 motif is present at residues 113–132 (TAGQEKFKCIASAYYRGAQV). 6 residues coordinate GTP: Gly115, Lys172, Asp174, Ser203, Ala204, and Lys205. Residues 243 to 267 (GDLIQMEGSPPETQESKRPSSLGCC) form a disordered region. S-geranylgeranyl cysteine attachment occurs at residues Cys266 and Cys267.

This sequence belongs to the small GTPase superfamily. Rab family. Requires Mg(2+) as cofactor. As to expression, ubiquitously present in all tissues examined.

It localises to the golgi apparatus membrane. It carries out the reaction GTP + H2O = GDP + phosphate + H(+). Its activity is regulated as follows. Regulated by guanine nucleotide exchange factors (GEFs) which promote the exchange of bound GDP for free GTP. Regulated by GTPase activating proteins (GAPs) which increase the GTP hydrolysis activity. Inhibited by GDP dissociation inhibitors (GDIs). Functionally, the small GTPases Rab are key regulators of intracellular membrane trafficking, from the formation of transport vesicles to their fusion with membranes. Rabs cycle between an inactive GDP-bound form and an active GTP-bound form that is able to recruit to membranes different sets of downstream effectors directly responsible for vesicle formation, movement, tethering and fusion. In Homo sapiens (Human), this protein is Ras-related protein Rab-36.